Here is a 403-residue protein sequence, read N- to C-terminus: Pyruvate, phosphate dikinase regulatory protein 1, chloroplastic (403 aa).

The N-terminal 86 residues, 1 to 86 (MALLSAMKLQ…NTTGPMRPIE (86 aa)), are a transit peptide targeting the chloroplast. Residues 1–108 (MALLSAMKLQ…DVSSSSNGVS (108 aa)) are disordered. Composition is skewed to low complexity over residues 17–26 (SSNLNPNSKP), 69–80 (STITNGSNNTTG), and 87–108 (SSSRTDVSTLDSDVSSSSNGVS). 269-276 (GVSRTGKT) lines the ADP pocket.

This sequence belongs to the pyruvate, phosphate/water dikinase regulatory protein family. PDRP subfamily. As to quaternary structure, interacts with PPDK1. Expressed in green tissues.

Its subcellular location is the plastid. The protein localises to the chloroplast stroma. The catalysed reaction is N(tele)-phospho-L-histidyl/L-threonyl-[pyruvate, phosphate dikinase] + ADP = N(tele)-phospho-L-histidyl/O-phospho-L-threonyl-[pyruvate, phosphate dikinase] + AMP + H(+). The enzyme catalyses N(tele)-phospho-L-histidyl/O-phospho-L-threonyl-[pyruvate, phosphate dikinase] + phosphate + H(+) = N(tele)-phospho-L-histidyl/L-threonyl-[pyruvate, phosphate dikinase] + diphosphate. Its activity is regulated as follows. Regulated by light/dark exposure. Functionally, bifunctional serine/threonine kinase and phosphorylase involved in the dark/light-mediated regulation of PPDK by catalyzing its phosphorylation/dephosphorylation. Dark/light-induced changes in stromal concentrations of the competing ADP and Pi substrates govern the direction of the reaction. In the dark, phosphorylates the catalytic intermediate of PPDK (PPDK-HisP), inactivating it. Light exposure induces the phosphorolysis reaction that reactivates PPDK. Unlike the kinase function which can utilize either Thr or Ser as target, the phosphorylase function has a strict substrate requirement for threonyl phosphate. The chain is Pyruvate, phosphate dikinase regulatory protein 1, chloroplastic (RP1) from Arabidopsis thaliana (Mouse-ear cress).